The following is a 292-amino-acid chain: MAPPTRLQVPRPGTAVPYTVLLGWLLAQVARAADTTGRAYNLTWKSTNFKTILEWEPKSIDHVYTVQISTRLENWKSKCFLTAETECDLTDEVVKDVGQTYMARVLSYPARNGNTTGFPEEPPFRNSPEFTPYLDTNLGQPTIQSFEQVGTKLNVTVQDARTLVRRNGTFLSLRAVFGKDLNYTLYYWRASSTGKKTATTNTNEFLIDVDKGENYCFSVQAVIPSRKRKQRSPESLTECTSREQGRAREMFFIIGAVVVVALLIIVLSVTVYKCRKARAGPSGKESSPLNIA.

The signal sequence occupies residues 1–32 (MAPPTRLQVPRPGTAVPYTVLLGWLLAQVARA). Residues 33–250 (ADTTGRAYNL…SREQGRAREM (218 aa)) are Extracellular-facing. 2 consecutive Fibronectin type-III domains span residues 35-126 (TTGR…PFRN) and 148-240 (QVGT…TECT). Asparagine 41 carries N-linked (GlcNAc...) asparagine glycosylation. 2 short sequence motifs (WKS motif) span residues 44–46 (WKS) and 75–77 (WKS). A disulfide bridge connects residues cysteine 79 and cysteine 87. Residues asparagine 114, asparagine 154, asparagine 167, and asparagine 182 are each glycosylated (N-linked (GlcNAc...) asparagine). Cysteines 216 and 239 form a disulfide. Residues 251 to 271 (FFIIGAVVVVALLIIVLSVTV) traverse the membrane as a helical segment. The Cytoplasmic segment spans residues 272-292 (YKCRKARAGPSGKESSPLNIA). A lipid anchor (S-palmitoyl cysteine) is attached at cysteine 274.

Belongs to the tissue factor family. In terms of assembly, interacts with HSPE; the interaction, inhibited by heparin, promotes the generation of activated factor X and activates coagulation in the presence of activated factor VII. As to expression, brain, heart.

The protein localises to the membrane. Functionally, initiates blood coagulation by forming a complex with circulating factor VII or VIIa. The [TF:VIIa] complex activates factors IX or X by specific limited proteolysis. TF plays a role in normal hemostasis by initiating the cell-surface assembly and propagation of the coagulation protease cascade. This is Tissue factor (F3) from Oryctolagus cuniculus (Rabbit).